A 380-amino-acid chain; its full sequence is Ribosomal RNA small subunit methyltransferase, mitochondrial (380 aa).

The N-terminal 26 residues, 1–26 (MILRLKDQTLIKINSTRSYLSSLVFR), are a transit peptide targeting the mitochondrion. Residues histidine 70, leucine 72, glycine 97, glutamate 118, aspartate 146, and asparagine 161 each coordinate S-adenosyl-L-methionine.

The protein belongs to the class I-like SAM-binding methyltransferase superfamily. rRNA adenine N(6)-methyltransferase family.

It is found in the mitochondrion. It carries out the reaction adenosine(1914)/adenosine(1915) in 18S rRNA + 4 S-adenosyl-L-methionine = N(6)-dimethyladenosine(1914)/N(6)-dimethyladenosine(1915) in 18S rRNA + 4 S-adenosyl-L-homocysteine + 4 H(+). Its function is as follows. N6-adenine methyltransferase which modifies the AA dinucleotide at the plant mitochondrial 18S rRNA nucleotides A1914 and A1915. Not active as mitochondrial transcription factor. This is Ribosomal RNA small subunit methyltransferase, mitochondrial from Arabidopsis thaliana (Mouse-ear cress).